Here is a 680-residue protein sequence, read N- to C-terminus: MATATASRLAVPAPRTSPQAPGRRRPAAPLPSAPPRPRALSAAPRGRVVCPAAPASSPASTTDAGQDRLQKVPVSNIRNFSIIAHIDHGKSTLADKLLELTGTVQKREMKQQFLDNMDLERERGITIKLQAARMRYIMNDEPYCLNLIDTPGHVDFSYEVSRSLAACEGALLVVDASQGVEAQTLANVYLALENDLEIIPVLNKIDLPGAEPDRVAQEIEEIIGMDCSNAIRCSAKEGIGITEILDAIVTKIPPPQNTAISPLRALIFDSYYDPYRGVIVYFRVVDGSIKKGDKICFMASGKEYVADEIGVLSPNQMQVSELYAGEVGYLSASIRSVADARVGDTITHSSKRAECALPGYSQATPMVFCGLFPIDADQFEELREALEKLQLNDAALKAVTRFSMQFEPESSSAMGFGFRCGFLGLLHMEIVQERLEREYNLNLIITAPSVVYHVNLADGETVECSNPSLLPEPGKRRSIEEPYVKIDMLTPKEYIGPIMELGQERRGEFKEMNFITENRASVVYELPLAEMVGDFFDQLKSRSKGYASMEYSLIGYRESNLVKLDIQINGDPVEALSTIVHRDKAYSVGRALTQKLKELIPRQMFRVPIQACIGAKVIASEALSAIRKDVLSKCYGGDISRKKKLLKKQAEGKKRMKAIGRVDVPQEAFMAVLKLEKEVL.

The N-terminal 51 residues, 1–51 (MATATASRLAVPAPRTSPQAPGRRRPAAPLPSAPPRPRALSAAPRGRVVCP), are a transit peptide targeting the chloroplast. The disordered stretch occupies residues 1–68 (MATATASRLA…ASTTDAGQDR (68 aa)). Over residues 28–37 (APLPSAPPRP) the composition is skewed to pro residues. Residues 38-60 (RALSAAPRGRVVCPAAPASSPAS) show a composition bias toward low complexity. In terms of domain architecture, tr-type G spans 75 to 256 (SNIRNFSIIA…AIVTKIPPPQ (182 aa)). Residues 84-91 (AHIDHGKS), 149-153 (DTPGH), and 203-206 (NKID) contribute to the GTP site.

Belongs to the TRAFAC class translation factor GTPase superfamily. Classic translation factor GTPase family. LepA subfamily.

Its subcellular location is the plastid. It is found in the chloroplast. It catalyses the reaction GTP + H2O = GDP + phosphate + H(+). Functionally, promotes chloroplast protein synthesis. May act as a fidelity factor of the translation reaction, by catalyzing a one-codon backward translocation of tRNAs on improperly translocated ribosomes. The protein is Translation factor GUF1 homolog, chloroplastic of Oryza sativa subsp. japonica (Rice).